We begin with the raw amino-acid sequence, 1405 residues long: Xanthine dehydrogenase (1405 aa).

Residues 17–104 (NKLTFYVNGV…GKHLITVEGI (88 aa)) enclose the 2Fe-2S ferredoxin-type domain. The [2Fe-2S] cluster site is built by C56, C61, C64, C86, C125, C128, C161, and C163. An FAD-binding PCMH-type domain is found at 288–474 (FGNEQKVWFR…TKIFVPETVP (187 aa)). FAD-binding positions include 316 to 323 (IVGGASEI), F397, 407 to 411 (TPAGN), D420, I464, and K483. Residues Q833 and F864 each coordinate Mo-molybdopterin. Substrate contacts are provided by E868 and R946. R978 is a binding site for Mo-molybdopterin. F980 serves as a coordination point for substrate. A1147 is a binding site for Mo-molybdopterin. E1333 functions as the Proton acceptor in the catalytic mechanism.

Belongs to the xanthine dehydrogenase family. As to quaternary structure, homodimer. Requires Mo-molybdopterin as cofactor. It depends on [2Fe-2S] cluster as a cofactor. The cofactor is FAD.

The protein resides in the cytoplasm. It catalyses the reaction hypoxanthine + NAD(+) + H2O = xanthine + NADH + H(+). The catalysed reaction is xanthine + NAD(+) + H2O = urate + NADH + H(+). Its pathway is purine metabolism. With respect to regulation, completely inhibited by allopurinol and significantly inhibited by adenine. Inhibited by Fe(2+), Cd(2+) and Zn(2+) and strongly inhibited by Cu(2+). Mg(2+) and Mo(2+) have no effect on activity. Its function is as follows. Key enzyme in purine degradation. Catalyzes the oxidation of hypoxanthine to xanthine. Catalyzes the oxidation of xanthine to uric acid. Oxidizes xanthine, hypoxanthine and pterine at high rates. Can also act on purine and guanine. The polypeptide is Xanthine dehydrogenase (Blastobotrys adeninivorans (Yeast)).